The chain runs to 250 residues: uncharacterized protein (250 aa).

This sequence to class-3 of adenylyl cyclases.

This is an uncharacterized protein from Mycobacterium tuberculosis (strain ATCC 25618 / H37Rv).